The sequence spans 578 residues: Proteasome-associated ATPase (578 aa).

Residues Arg-35–Gln-84 adopt a coiled-coil conformation. Gly-266–Leu-271 is an ATP binding site. Positions Tyr-577–Leu-578 are docks into pockets in the proteasome alpha-ring.

Belongs to the AAA ATPase family. In terms of assembly, homohexamer. Assembles into a hexameric ring structure that caps the 20S proteasome core. Strongly interacts with the prokaryotic ubiquitin-like protein Pup through a hydrophobic interface; the interacting region of ARC lies in its N-terminal coiled-coil domain. There is one Pup binding site per ARC hexamer ring. Upon ATP-binding, the C-terminus of ARC interacts with the alpha-rings of the proteasome core, possibly by binding to the intersubunit pockets.

Its pathway is protein degradation; proteasomal Pup-dependent pathway. Functionally, ATPase which is responsible for recognizing, binding, unfolding and translocation of pupylated proteins into the bacterial 20S proteasome core particle. May be essential for opening the gate of the 20S proteasome via an interaction with its C-terminus, thereby allowing substrate entry and access to the site of proteolysis. Thus, the C-termini of the proteasomal ATPase may function like a 'key in a lock' to induce gate opening and therefore regulate proteolysis. This chain is Proteasome-associated ATPase, found in Kineococcus radiotolerans (strain ATCC BAA-149 / DSM 14245 / SRS30216).